Consider the following 714-residue polypeptide: Sodium-dependent acetylcholine transporter (714 aa).

The disordered stretch occupies residues 1–21 (MSVSSNDPEQRNGRGMASGNN). At 1–74 (MSVSSNDPEQ…GNWSNKSDYL (74 aa)) the chain is on the cytoplasmic side. The next 3 membrane-spanning stretches (helical) occupy residues 75–95 (LAVI…FLVF), 100–120 (AAFL…MFFM), and 152–172 (ISGF…FYLI). The Extracellular portion of the chain corresponds to 173 to 257 (NSFSFSIPWS…LSKGVDDFGT (85 aa)). Asn192, Asn205, Asn211, and Asn222 each carry an N-linked (GlcNAc...) asparagine glycan. 9 helical membrane-spanning segments follow: residues 258 to 278 (LNWY…LCLF), 287 to 307 (VVYV…TRLL), 336 to 356 (AAVQ…TIAS), 368 to 388 (IWLV…LTFS), 422 to 442 (AGVS…LLVV), 476 to 496 (VCAL…LFWM), 502 to 522 (FVLT…INWV), 548 to 568 (ILFK…LWLD), and 584 to 604 (ILTA…VGIW). The Cytoplasmic segment spans residues 605 to 714 (QFCIAKGTIT…IPKFERETAI (110 aa)).

Belongs to the sodium:neurotransmitter symporter (SNF) (TC 2.A.22) family. In terms of assembly, interacts with stn-1; part of the DGC. As to expression, body wall, and vulval and enteric muscles.

Its subcellular location is the cell membrane. It is found in the postsynaptic cell membrane. Functionally, mediates sodium-dependent uptake of acetylcholine at neuromuscular junctions during periods of increased synaptic activity, may also prevent spillover to adjacent synaptic sites. Not involved in the uptake of other neurotransmitters (GABA, glycine, proline and glutamate) and there was also no inhibition of uptake by adding an excess of other candidate substrates (GABA, glycine, taurine, creatine, proline, alanine, carnitine, glutamate and betaine). Required for muscle integrity; altered transport of acetylcholine due to loss of dystrophin-glycoprotein complex (DGC) function results in muscle degeneration. The chain is Sodium-dependent acetylcholine transporter from Caenorhabditis elegans.